The primary structure comprises 59 residues: Large ribosomal subunit protein bL32 (59 aa).

The interval 1-59 (MAVQQNKKSPSKRGMHRAHDFLTTPPLAVESTTGEAHLRHHISPAGFYRGKKVTKGKGE) is disordered. A compositionally biased stretch (basic residues) spans 49 to 59 (RGKKVTKGKGE).

It belongs to the bacterial ribosomal protein bL32 family.

The protein is Large ribosomal subunit protein bL32 of Dechloromonas aromatica (strain RCB).